The primary structure comprises 131 residues: Large ribosomal subunit protein bL19 (131 aa).

It belongs to the bacterial ribosomal protein bL19 family.

In terms of biological role, this protein is located at the 30S-50S ribosomal subunit interface and may play a role in the structure and function of the aminoacyl-tRNA binding site. The sequence is that of Large ribosomal subunit protein bL19 from Polynucleobacter necessarius subsp. necessarius (strain STIR1).